Here is a 288-residue protein sequence, read N- to C-terminus: UAP56-interacting factor (288 aa).

Residues 11 to 29 (TIDKIDMSLDDIIKLNKQE) carry the UAP56-binding motif motif. The tract at residues 183–202 (DLPELSKTPPWRTSVSSGGS) is disordered.

The protein belongs to the UIF family.

Its subcellular location is the nucleus. The protein resides in the nucleoplasm. It localises to the nucleus speckle. Its function is as follows. Required for mRNA export from the nucleus to the cytoplasm. Acts as an adapter that uses the ddx39b/uap56-nfx1 pathway to ensure efficient mRNA export and delivering to the nuclear pore. The protein is UAP56-interacting factor (fyttd1) of Xenopus laevis (African clawed frog).